The primary structure comprises 519 residues: Pleckstrin homology domain-containing family A member 8 (519 aa).

The region spanning 1-93 (MEGVLYKWTN…WLVALGSAKA (93 aa)) is the PH domain. T139 is modified (phosphothreonine). The residue at position 145 (S145) is a Phosphoserine. The residue at position 153 (T153) is a Phosphothreonine. The glycolipid transfer protein homology domain stretch occupies residues 310-519 (TFFSTMNTSF…VHGLESDEVV (210 aa)).

Homodimer. Interacts with ARF1; the interaction together with phosphatidylinositol 4-phosphate binding is required for FAPP2 GlcCer transfer ability. As to expression, expressed in kidney cell lines.

Its subcellular location is the golgi apparatus. It is found in the trans-Golgi network membrane. The protein resides in the membrane. Functionally, cargo transport protein that is required for apical transport from the Golgi complex. Transports AQP2 from the trans-Golgi network (TGN) to sites of AQP2 phosphorylation. Mediates the non-vesicular transport of glucosylceramide (GlcCer) from the trans-Golgi network (TGN) to the plasma membrane and plays a pivotal role in the synthesis of complex glycosphingolipids. Binding of both phosphatidylinositol 4-phosphate (PIP) and ARF1 are essential for the GlcCer transfer ability. Also required for primary cilium formation, possibly by being involved in the transport of raft lipids to the apical membrane, and for membrane tubulation. The protein is Pleckstrin homology domain-containing family A member 8 (PLEKHA8) of Homo sapiens (Human).